A 1823-amino-acid polypeptide reads, in one-letter code: Vitellogenin (1823 aa).

Positions 1-14 (MWKLLLVALAFALA) are cleaved as a signal peptide. Glutamine 17 is modified (pyrrolidone carboxylic acid). The 641-residue stretch at 18-658 (FQPGKVYRYS…SPSGPLPRAV (641 aa)) folds into the Vitellogenin domain. The interval 953–986 (KGLISQQQQQPHHQQQPHQHGQDQARAAYQRPWA) is disordered. A compositionally biased stretch (low complexity) spans 958–976 (QQQQQPHHQQQPHQHGQDQ). A glycan (N-linked (GlcNAc...) asparagine) is linked at asparagine 1097. The interval 1119-1289 (SDKDKDAKKP…SSSSSESKSL (171 aa)) is disordered. 2 stretches are compositionally biased toward low complexity: residues 1128–1149 (PPGS…SSSD) and 1178–1192 (SSSS…SDSS). Over residues 1194 to 1206 (SPHKHGGAKRQHA) the composition is skewed to basic residues. Low complexity-rich tracts occupy residues 1217–1238 (SHSS…KSFS) and 1253–1286 (SSSS…SSES). Residue asparagine 1298 is glycosylated (N-linked (GlcNAc...) asparagine). The interval 1308 to 1351 (VPQRKPQTSRRHTPASSSSSSSSSSSSSSSSSSSDSDMTVSAES) is disordered. A compositionally biased stretch (low complexity) spans 1323 to 1344 (SSSSSSSSSSSSSSSSSSSDSD). The region spanning 1564-1732 (SACELNEQSL…SWIAPDETCG (169 aa)) is the VWFD domain. Intrachain disulfides connect cysteine 1566–cysteine 1695 and cysteine 1589–cysteine 1731. An N-linked (GlcNAc...) asparagine glycan is attached at asparagine 1675.

Post-translationally, what corresponds to phosvitin in other species is lost during maturation of vitellogenin to lipovitellin. In terms of tissue distribution, produced by the liver, secreted into the blood and then sequestered by receptor mediated endocytosis into growing oocytes, where it is generally cleaved, giving rise to the respective yolk components lipovitellins 1 and 2.

Precursor of the major egg-yolk proteins that are sources of nutrients during early development of oviparous organisms. The protein is Vitellogenin of Ichthyomyzon unicuspis (Silver lamprey).